Reading from the N-terminus, the 657-residue chain is 1-deoxy-D-xylulose-5-phosphate synthase (657 aa).

Thiamine diphosphate is bound by residues His-73 and 113–115 (SHA). Asp-145 contacts Mg(2+). Thiamine diphosphate contacts are provided by residues 146 to 147 (GA), Asn-175, Tyr-293, and Glu-375. Asn-175 serves as a coordination point for Mg(2+).

The protein belongs to the transketolase family. DXPS subfamily. In terms of assembly, homodimer. The cofactor is Mg(2+). It depends on thiamine diphosphate as a cofactor.

The enzyme catalyses D-glyceraldehyde 3-phosphate + pyruvate + H(+) = 1-deoxy-D-xylulose 5-phosphate + CO2. Its pathway is metabolic intermediate biosynthesis; 1-deoxy-D-xylulose 5-phosphate biosynthesis; 1-deoxy-D-xylulose 5-phosphate from D-glyceraldehyde 3-phosphate and pyruvate: step 1/1. In terms of biological role, catalyzes the acyloin condensation reaction between C atoms 2 and 3 of pyruvate and glyceraldehyde 3-phosphate to yield 1-deoxy-D-xylulose-5-phosphate (DXP). The polypeptide is 1-deoxy-D-xylulose-5-phosphate synthase (Paenarthrobacter aurescens (strain TC1)).